The chain runs to 130 residues: Small ribosomal subunit protein uS8 (130 aa).

Belongs to the universal ribosomal protein uS8 family. As to quaternary structure, part of the 30S ribosomal subunit. Contacts proteins S5 and S12.

Functionally, one of the primary rRNA binding proteins, it binds directly to 16S rRNA central domain where it helps coordinate assembly of the platform of the 30S subunit. This Acidiphilium cryptum (strain JF-5) protein is Small ribosomal subunit protein uS8.